The following is a 419-amino-acid chain: Protein FAM217A (419 aa).

Disordered stretches follow at residues 1-23 (MGRK…QENL), 100-119 (DKRN…LSES), 234-298 (PSSS…SRSL), and 362-388 (PIPL…HRKS). Over residues 7-23 (ESCSANPHSSSISQENL) the composition is skewed to polar residues. Residues 284-298 (SLSTAGKSKSNSRSL) show a composition bias toward polar residues. The segment covering 378–388 (PRTKKKCHRKS) has biased composition (basic residues).

This sequence belongs to the FAM217 family.

This is Protein FAM217A (Fam217a) from Rattus norvegicus (Rat).